We begin with the raw amino-acid sequence, 276 residues long: MAQFTLYNKHSAPPSSESTRVDCEHVPLCSINDVQLRFLVPDDLTEVRQLCQEWFPIDYPLSWYEDITSSTRFFALAAVYNLAIIGLIVAEIKPYRNVNKEVIANMSDSDELYTRLSGFPMQDKGILPDSMGRSADVGYILSLGVHRSHRRNGIGSLLLDALMNHLTTAERHSVKAIFLHTLTTNQPAIFFYEKRRFTLHSFLPYYYNIRGKGKDGFTYVNYINGGHPPWTLLDHIKHYASMVRHTSSLCAWLAGRVQQVVRWFYHKLLTRFNFIE.

An N-acetyltransferase domain is found at 34 to 239 (VQLRFLVPDD…WTLLDHIKHY (206 aa)). Y59 is a binding site for substrate. The active site involves Y139. L141 is a binding site for substrate. Acetyl-CoA is bound by residues 143 to 145 (LGV) and 151 to 156 (RNGIGS). H180 is a catalytic residue. Residues N185 and 192–195 (YEKR) contribute to the acetyl-CoA site. Positions 204–215 (PYYYNIRGKGKD) are required for homodimerization. Residue Y207 participates in substrate binding.

Belongs to the acetyltransferase family. NAA60 subfamily.

The enzyme catalyses N-terminal L-methionyl-[transmembrane protein] + acetyl-CoA = N-terminal N(alpha)-acetyl-L-methionyl-[transmembrane protein] + CoA + H(+). It carries out the reaction L-lysyl-[protein] + acetyl-CoA = N(6)-acetyl-L-lysyl-[protein] + CoA + H(+). In terms of biological role, displays alpha (N-terminal) acetyltransferase activity towards a range of N-terminal sequences including those starting with Met-Lys, Met-Val, Met-Ala and Met-Met. Required for normal chromosomal segregation during anaphase. Functionally, shows histone acetyltransferase activity toward free histones. Its function is as follows. Does not show histone acetyltransferase activity toward free histones. The polypeptide is N-alpha-acetyltransferase 60 (Drosophila melanogaster (Fruit fly)).